The sequence spans 468 residues: Homocitrate synthase (468 aa).

In terms of domain architecture, Pyruvate carboxyltransferase spans 11-266 (VGILDSTLRE…IEVVDLKKLS (256 aa)). Arginine 19 serves as a coordination point for 2-oxoglutarate. Residue glutamate 20 participates in Mg(2+) binding. Residues histidine 83, arginine 143, and threonine 177 each contribute to the 2-oxoglutarate site. Positions 205 and 207 each coordinate Mg(2+). Histidine 299 serves as the catalytic Proton acceptor.

It belongs to the alpha-IPM synthase/homocitrate synthase family. Homocitrate synthase LYS20/LYS21 subfamily. Mg(2+) serves as cofactor. The cofactor is Mn(2+).

The catalysed reaction is acetyl-CoA + 2-oxoglutarate + H2O = (2R)-homocitrate + CoA + H(+). It functions in the pathway amino-acid biosynthesis; L-lysine biosynthesis via AAA pathway; L-alpha-aminoadipate from 2-oxoglutarate: step 1/5. With respect to regulation, inhibited by lysine. In terms of biological role, catalyzes the aldol-type condensation of 2-oxoglutarate with acetyl-CoA to yield homocitrate. Carries out the first step of the alpha-aminoadipate (AAA) lysine biosynthesis pathway. Does not display 2-isopropylmalate synthase and citramalate synthase activities since it cannot use 2-oxoisovalerate or pyruvate as substrate. The polypeptide is Homocitrate synthase (Sulfolobus acidocaldarius (strain ATCC 33909 / DSM 639 / JCM 8929 / NBRC 15157 / NCIMB 11770)).